Reading from the N-terminus, the 314-residue chain is tRNA selenocysteine 1-associated protein 1 (314 aa).

RRM domains follow at residues 2–85 (NSLW…RSNY) and 94–173 (FSLF…LASS).

This sequence belongs to the RRM TRSPAP family.

Its subcellular location is the nucleus. It is found in the cytoplasm. Functionally, involved in the early steps of selenocysteine biosynthesis and tRNA(Sec) charging to the later steps resulting in the cotranslational incorporation of selenocysteine into selenoproteins. In Danio rerio (Zebrafish), this protein is tRNA selenocysteine 1-associated protein 1.